Reading from the N-terminus, the 160-residue chain is Large ribosomal subunit protein uL30m (160 aa).

Residues 1–34 constitute a mitochondrion transit peptide; sequence MAGVLRSAFPRPPCRLQTVKKGAESLIGTEWIRH. The disordered stretch occupies residues 44–64; sequence KVFQPKPEDHEKYGGDPQNPH.

The protein belongs to the universal ribosomal protein uL30 family. In terms of assembly, component of the mitochondrial ribosome large subunit (39S) which comprises a 16S rRNA and about 50 distinct proteins.

It localises to the mitochondrion. The protein is Large ribosomal subunit protein uL30m (Mrpl30) of Mus musculus (Mouse).